The primary structure comprises 123 residues: UPF0738 protein BALH_1059 (123 aa).

Belongs to the UPF0738 family.

The polypeptide is UPF0738 protein BALH_1059 (Bacillus thuringiensis (strain Al Hakam)).